A 278-amino-acid chain; its full sequence is Tryptophan synthase alpha chain (278 aa).

Catalysis depends on proton acceptor residues Glu50 and Asp61.

It belongs to the TrpA family. As to quaternary structure, tetramer of two alpha and two beta chains.

The catalysed reaction is (1S,2R)-1-C-(indol-3-yl)glycerol 3-phosphate + L-serine = D-glyceraldehyde 3-phosphate + L-tryptophan + H2O. It participates in amino-acid biosynthesis; L-tryptophan biosynthesis; L-tryptophan from chorismate: step 5/5. In terms of biological role, the alpha subunit is responsible for the aldol cleavage of indoleglycerol phosphate to indole and glyceraldehyde 3-phosphate. This chain is Tryptophan synthase alpha chain, found in Nitrobacter hamburgensis (strain DSM 10229 / NCIMB 13809 / X14).